A 950-amino-acid chain; its full sequence is RNA polymerase-associated protein RapA (950 aa).

A Helicase ATP-binding domain is found at 165-333 (EVADRMAPRV…FARLRLLDPN (169 aa)). 178–185 (DEVGLGKT) lines the ATP pocket. Positions 279 to 282 (DEAH) match the DEAH box motif. The Helicase C-terminal domain maps to 475-629 (RVEWLIDTLK…TCPTGNALQH (155 aa)).

This sequence belongs to the SNF2/RAD54 helicase family. RapA subfamily. Interacts with the RNAP. Has a higher affinity for the core RNAP than for the holoenzyme. Its ATPase activity is stimulated by binding to RNAP.

Its function is as follows. Transcription regulator that activates transcription by stimulating RNA polymerase (RNAP) recycling in case of stress conditions such as supercoiled DNA or high salt concentrations. Probably acts by releasing the RNAP, when it is trapped or immobilized on tightly supercoiled DNA. Does not activate transcription on linear DNA. Probably not involved in DNA repair. The sequence is that of RNA polymerase-associated protein RapA from Pseudomonas aeruginosa (strain LESB58).